A 378-amino-acid chain; its full sequence is Outer membrane porin C (378 aa).

Positions 1–21 (MKVKVLSLLVPALLVAGAANA) are cleaved as a signal peptide.

Belongs to the Gram-negative porin family. Homotrimer.

The protein localises to the cell outer membrane. Its function is as follows. Forms pores that allow passive diffusion of small molecules across the outer membrane. The polypeptide is Outer membrane porin C (ompC) (Salmonella typhimurium (strain LT2 / SGSC1412 / ATCC 700720)).